A 287-amino-acid polypeptide reads, in one-letter code: MARKYVPHTTELCENSLKKFKSLVGTVDKLLIITGAGISTESGIPDYRSKDVGLYTKTALEPIYFQDFMKSKKCRQRYWSRSYLNWPRFAQALPNFNHYALSKWEAANKFHWLITQNVDGLHLKAGSKMITELHGNALQVKCTSCEYIETRQTYQDRLNYANPGFKEQFVSPGQQELDADTALPLGSEQGFKIPECLNCGGLMKTDVTLFGENLNTDKIKVCGKKVNECNGVLTLGTSLEVLSGYQIVNHAHMQNKPIFIVNIGPTRADQMATMKLDYRISDVLKEM.

Residues 10–287 enclose the Deacetylase sirtuin-type domain; it reads TELCENSLKK…YRISDVLKEM (278 aa). NAD(+)-binding positions include 35-55 and 116-119; these read GAGISTESGIPDYRSKDVGLY and QNVD. The active-site Proton acceptor is histidine 134. Residues cysteine 142, cysteine 145, cysteine 196, and cysteine 199 each coordinate Zn(2+). NAD(+) contacts are provided by residues 236 to 238, 262 to 264, and isoleucine 280; these read GTS and NIG.

Belongs to the sirtuin family. Class II subfamily. Interacts with pyc-1, pcca-1 and mccc-1. Zn(2+) is required as a cofactor. In terms of tissue distribution, ubiquitously expressed with high expression in the pharynx, body wall muscles and gonad. Strong expression in a subset of non-neuronal cells in the head.

It localises to the mitochondrion matrix. Its subcellular location is the mitochondrion. It catalyses the reaction N(6)-acetyl-L-lysyl-[protein] + NAD(+) + H2O = 2''-O-acetyl-ADP-D-ribose + nicotinamide + L-lysyl-[protein]. Its function is as follows. NAD-dependent protein deacylase. Catalyzes the NAD-dependent hydrolysis of acyl groups from lysine residues. Plays a role in oxidative stress resistance. Might promote neuronal cell death under ischemic conditions and cell death in touch neurons induced by mec-4 channel hyperactivation, possibly downstream of the insulin-like receptor daf-2. Might attenuate the reactive oxygen species (ROS) scavenging system, that eliminates ROS in ischemic conditions, under dietary deprivation and when glycolysis is blocked. The sequence is that of NAD-dependent protein deacylase sir-2.3 (sir-2.3) from Caenorhabditis elegans.